We begin with the raw amino-acid sequence, 250 residues long: Probable transcriptional regulatory protein DP2908 (250 aa).

This sequence belongs to the TACO1 family.

It localises to the cytoplasm. In Desulfotalea psychrophila (strain LSv54 / DSM 12343), this protein is Probable transcriptional regulatory protein DP2908.